Reading from the N-terminus, the 492-residue chain is Ribose import ATP-binding protein RbsA (492 aa).

ABC transporter domains follow at residues 3-239 (IEMK…VGRS) and 249-492 (AEIR…TGGQ). 35–42 (GENGAGKS) lines the ATP pocket.

The protein belongs to the ABC transporter superfamily. Ribose importer (TC 3.A.1.2.1) family. As to quaternary structure, the complex is composed of an ATP-binding protein (RbsA), two transmembrane proteins (RbsC) and a solute-binding protein (RbsB).

The protein resides in the cell membrane. The catalysed reaction is D-ribose(out) + ATP + H2O = D-ribose(in) + ADP + phosphate + H(+). In terms of biological role, part of the ABC transporter complex RbsABC involved in ribose import. Responsible for energy coupling to the transport system. This is Ribose import ATP-binding protein RbsA from Lactococcus lactis subsp. lactis (strain IL1403) (Streptococcus lactis).